A 199-amino-acid chain; its full sequence is NADH-quinone oxidoreductase subunit C (199 aa).

This sequence belongs to the complex I 30 kDa subunit family. In terms of assembly, NDH-1 is composed of 14 different subunits. Subunits NuoB, C, D, E, F, and G constitute the peripheral sector of the complex.

It is found in the cell inner membrane. It catalyses the reaction a quinone + NADH + 5 H(+)(in) = a quinol + NAD(+) + 4 H(+)(out). In terms of biological role, NDH-1 shuttles electrons from NADH, via FMN and iron-sulfur (Fe-S) centers, to quinones in the respiratory chain. The immediate electron acceptor for the enzyme in this species is believed to be ubiquinone. Couples the redox reaction to proton translocation (for every two electrons transferred, four hydrogen ions are translocated across the cytoplasmic membrane), and thus conserves the redox energy in a proton gradient. The protein is NADH-quinone oxidoreductase subunit C of Cupriavidus pinatubonensis (strain JMP 134 / LMG 1197) (Cupriavidus necator (strain JMP 134)).